A 336-amino-acid polypeptide reads, in one-letter code: Anthranilate phosphoribosyltransferase (336 aa).

5-phospho-alpha-D-ribose 1-diphosphate-binding positions include G78, 81–82 (GD), T86, 88–91 (NVST), 106–114 (KHGNYSVSS), and S118. G78 contributes to the anthranilate binding site. Residue S90 coordinates Mg(2+). N109 lines the anthranilate pocket. R164 is an anthranilate binding site. Residues D222 and E223 each contribute to the Mg(2+) site.

Belongs to the anthranilate phosphoribosyltransferase family. In terms of assembly, homodimer. Mg(2+) is required as a cofactor.

It catalyses the reaction N-(5-phospho-beta-D-ribosyl)anthranilate + diphosphate = 5-phospho-alpha-D-ribose 1-diphosphate + anthranilate. It functions in the pathway amino-acid biosynthesis; L-tryptophan biosynthesis; L-tryptophan from chorismate: step 2/5. In terms of biological role, catalyzes the transfer of the phosphoribosyl group of 5-phosphorylribose-1-pyrophosphate (PRPP) to anthranilate to yield N-(5'-phosphoribosyl)-anthranilate (PRA). The sequence is that of Anthranilate phosphoribosyltransferase from Halobacterium salinarum (strain ATCC 29341 / DSM 671 / R1).